The sequence spans 242 residues: uncharacterized protein (242 aa).

2 helical membrane-spanning segments follow: residues 4–24 and 34–54; these read NYQVSLIFSVIYVVTNSYYVV and LLFGSFYLTMEVFQTLQWLFG. An N-linked (GlcNAc...) asparagine; by host glycan is attached at Asn-73. 3 helical membrane-spanning segments follow: residues 74–94, 106–126, and 162–182; these read YTIVAFILIWLQPILFSVIGY, VLTVLNCFVFFYGLKLLYGGF, and LDVFPNHLTYIILCIISFVMY. N-linked (GlcNAc...) asparagine; by host glycosylation is present at Asn-185. 2 helical membrane passes run 189–209 and 217–237; these read VIGLGWLLSLIVTKLLLAPTL and CLLSIIANLLIVAYVHISTGI.

The protein localises to the membrane. This is an uncharacterized protein from Acanthamoeba polyphaga mimivirus (APMV).